A 328-amino-acid chain; its full sequence is Alanine racemase (328 aa).

The active-site Proton acceptor; specific for D-alanine is lysine 33. An N6-(pyridoxal phosphate)lysine modification is found at lysine 33. Arginine 118 lines the substrate pocket. The Proton acceptor; specific for L-alanine role is filled by tyrosine 237. Residue methionine 283 participates in substrate binding.

Belongs to the alanine racemase family. It depends on pyridoxal 5'-phosphate as a cofactor.

It catalyses the reaction L-alanine = D-alanine. Its pathway is amino-acid biosynthesis; D-alanine biosynthesis; D-alanine from L-alanine: step 1/1. Functionally, catalyzes the interconversion of L-alanine and D-alanine. May also act on other amino acids. The protein is Alanine racemase (alr) of Campylobacter jejuni subsp. jejuni serotype O:6 (strain 81116 / NCTC 11828).